A 133-amino-acid polypeptide reads, in one-letter code: Ribosome-binding factor A (133 aa).

It belongs to the RbfA family. Monomer. Binds 30S ribosomal subunits, but not 50S ribosomal subunits or 70S ribosomes.

Its subcellular location is the cytoplasm. One of several proteins that assist in the late maturation steps of the functional core of the 30S ribosomal subunit. Associates with free 30S ribosomal subunits (but not with 30S subunits that are part of 70S ribosomes or polysomes). Required for efficient processing of 16S rRNA. May interact with the 5'-terminal helix region of 16S rRNA. This chain is Ribosome-binding factor A, found in Chelativorans sp. (strain BNC1).